We begin with the raw amino-acid sequence, 749 residues long: Disintegrin and metalloproteinase domain-containing protein 10 (749 aa).

Residues 1 to 18 (MVLPTVLILLLSWAAGLG) form the signal peptide. Residues 19–214 (GQYGNPLNKY…MGPELLRKKR (196 aa)) constitute a propeptide that is removed on maturation. Residues 171–178 (GGCADHSV) carry the Cysteine switch motif. Cysteine 173 contributes to the Zn(2+) binding site. The Extracellular portion of the chain corresponds to 215 to 673 (TTLAERNTCQ…SPQLYENIAE (459 aa)). The 237-residue stretch at 221–457 (NTCQLYIQTD…KRNNCFVESG (237 aa)) folds into the Peptidase M12B domain. Disulfide bonds link cysteine 223–cysteine 314, cysteine 345–cysteine 452, cysteine 400–cysteine 436, cysteine 461–cysteine 496, cysteine 472–cysteine 485, cysteine 474–cysteine 480, cysteine 484–cysteine 516, cysteine 504–cysteine 512, cysteine 511–cysteine 537, cysteine 525–cysteine 544, cysteine 531–cysteine 563, cysteine 556–cysteine 568, cysteine 573–cysteine 599, cysteine 581–cysteine 608, cysteine 583–cysteine 598, cysteine 595–cysteine 640, and cysteine 633–cysteine 646. N-linked (GlcNAc...) asparagine glycosylation is found at asparagine 268 and asparagine 279. Zn(2+) is bound at residue histidine 384. The active site involves glutamate 385. Positions 388 and 394 each coordinate Zn(2+). The N-linked (GlcNAc...) asparagine glycan is linked to asparagine 440. A Disintegrin domain is found at 458–552 (QPICGNGMVE…LCPASDPKPN (95 aa)). Asparagine 552 is a glycosylation site (N-linked (GlcNAc...) asparagine). The helical transmembrane segment at 674 to 697 (WIVAHWWAVLLMGIALIMLMAGFI) threads the bilayer. Topologically, residues 698 to 749 (KICSVHTPSSNPKLPPPKPLPGTLKRRRPPQPIQQPPRQRPRESYQMGHMRR) are cytoplasmic. The tract at residues 705 to 749 (PSSNPKLPPPKPLPGTLKRRRPPQPIQQPPRQRPRESYQMGHMRR) is disordered. Residues 709-716 (PKLPPPKP) carry the SH3-binding motif. A Phosphothreonine modification is found at threonine 720. The SH3-binding motif lies at 723-729 (RRRPPQP). Residues 735–749 (RQRPRESYQMGHMRR) are interaction with AP2A1, AP2A2 and AP2M1.

As to quaternary structure, forms a ternary EFNA5-EPHA3-ADAM10 complex mediating EFNA5 extracellular domain shedding by ADAM10 which regulates the EFNA5-EPHA3 complex internalization and function, the cleavage occurs in trans, with ADAM10 and its substrate being on the membranes of opposing cells. Interacts with the clathrin adapter AP2 complex subunits AP2A1, AP2A2, AP2B1, and AP2M1; this interaction facilitates ADAM10 endocytosis from the plasma membrane during long-term potentiation in hippocampal neurons. Forms a ternary complex composed of ADAM10, EPHA4 and CADH1; within the complex, ADAM10 cleaves CADH1 which disrupts adherens junctions. Interacts with EPHA2. Interacts with NGF in a divalent cation-dependent manner. Interacts with TSPAN14; the interaction promotes ADAM10 maturation and cell surface expression. Interacts with TSPAN5, TSPAN10, TSPAN14, TSPAN15, TSPAN17 and TSPAN33; these interactions regulate ADAM10 substrate specificity, endocytosis and turnover. Interacts (via extracellular domain) with TSPAN33 (via extracellular domain) and (via cytoplasmic domain) with AFDN; interaction with TSPAN33 allows the docking of ADAM10 to zonula adherens through a PDZ11-dependent interaction between TSPAN33 and PLEKHA7 while interaction with AFDN locks ADAM10 at zonula adherens. Interacts with DLG1; this interaction recruits ADAM10 to the cell membrane during long-term depression in hippocampal neurons. Interacts (via extracellular domain) with BACE1 (via extracellular domain). Interacts with FAM171A1. Zn(2+) is required as a cofactor. The precursor is cleaved by furin and PCSK7. As to expression, expressed in brain, kidney, lung, spleen, ovary and testis.

It is found in the cell membrane. Its subcellular location is the golgi apparatus membrane. It localises to the cytoplasmic vesicle. The protein localises to the clathrin-coated vesicle. The protein resides in the cell projection. It is found in the axon. Its subcellular location is the dendrite. It localises to the cell junction. The protein localises to the adherens junction. The protein resides in the cytoplasm. The enzyme catalyses Endopeptidase of broad specificity.. With respect to regulation, catalytically inactive when the propeptide is intact and associated with the mature enzyme. The disintegrin and cysteine-rich regions modulate access of substrates to exerts an inhibitory effect on the cleavage of ADAM10 substrates. Its function is as follows. Transmembrane metalloprotease which mediates the ectodomain shedding of a myriad of transmembrane proteins, including adhesion proteins, growth factor precursors and cytokines being essential for development and tissue homeostasis. Associates with six members of the tetraspanin superfamily TspanC8 which regulate its exit from the endoplasmic reticulum and its substrate selectivity. Cleaves the membrane-bound precursor of TNF-alpha at '76-Ala-|-Val-77' to its mature soluble form. Responsible for the proteolytical release of soluble JAM3 from endothelial cells surface. Responsible for the proteolytic release of several other cell-surface proteins, including heparin-binding epidermal growth-like factor, ephrin-A2, CD44, CDH2 and for constitutive and regulated alpha-secretase cleavage of amyloid precursor protein (APP). Contributes to the normal cleavage of the cellular prion protein. Involved in the cleavage of the adhesion molecule L1 at the cell surface and in released membrane vesicles, suggesting a vesicle-based protease activity. Also controls the proteolytic processing of Notch and mediates lateral inhibition during neurogenesis. Required for the development of type 1 transitional B cells into marginal zone B cells, probably by cleaving Notch. Responsible for the FasL ectodomain shedding and for the generation of the remnant ADAM10-processed FasL (FasL APL) transmembrane form. Also cleaves the ectodomain of the integral membrane proteins CORIN and ITM2B. Mediates the proteolytic cleavage of LAG3, leading to release the secreted form of LAG3. Mediates the proteolytic cleavage of IL6R and IL11RA, leading to the release of secreted forms of IL6R and IL11RA. Enhances the cleavage of CHL1 by BACE1. Cleaves NRCAM. Cleaves TREM2, resulting in shedding of the TREM2 ectodomain. Involved in the development and maturation of glomerular and coronary vasculature. During development of the cochlear organ of Corti, promotes pillar cell separation by forming a ternary complex with CADH1 and EPHA4 and cleaving CADH1 at adherens junctions. May regulate the EFNA5-EPHA3 signaling. Regulates leukocyte transmigration as a sheddase for the adherens junction protein VE-cadherin/CDH5 in endothelial cells. The sequence is that of Disintegrin and metalloproteinase domain-containing protein 10 (Adam10) from Rattus norvegicus (Rat).